The sequence spans 416 residues: Neurotensin receptor type 2 (416 aa).

Residues 1–32 (METSSPWPPRPSPSAGLSLEARLGVDTRLWAK) are Extracellular-facing. The helical transmembrane segment at 33 to 55 (VLFTALYSLIFAFGTAGNALSVH) threads the bilayer. At 56–64 (VVLKARAGR) the chain is on the cytoplasmic side. Residues 65-87 (PGRLRYHVLSLALSALLLLLVSM) traverse the membrane as a helical segment. Residues 88-109 (PMELYNFVWSHYPWVFGDLGCR) lie on the Extracellular side of the membrane. A disulfide bridge links Cys108 with Cys194. Residues 110 to 131 (GYYFVRELCAYATVLSVASLSA) traverse the membrane as a helical segment. Topologically, residues 132–154 (ERCLAVCQPLRARRLLTPRRTRR) are cytoplasmic. Residues 155 to 176 (LLSLVWVASLGLALPMAVIMGQ) traverse the membrane as a helical segment. At 177 to 216 (KHEVESADGEPEPASRVCTVLVSRATLQVFIQVNVLVSFA) the chain is on the extracellular side. Residues 217–237 (LPLALTAFLNGITVNHLMALY) form a helical membrane-spanning segment. Topologically, residues 238–297 (SQVPSASAQVSSIPSRLELLSEEGLLGFITWRKTLSLGVQASLVRHKDASQIRSLQHSAQ) are cytoplasmic. A helical membrane pass occupies residues 298–318 (VLRAIVAVYVICWLPYHARRL). Over 319–337 (MYCYIPDDGWTNELYDFYH) the chain is Extracellular. The helical transmembrane segment at 338–358 (YFYMVTNTLFYVSSAVTPILY) threads the bilayer. Residues 359-416 (NAVSSSFRKLFLESLGSLCGEQHSLVPLPQEAPESTTSTYSFRLWGSPRNPSLGEIQV) are Cytoplasmic-facing. The S-palmitoyl cysteine moiety is linked to residue Cys377. Ser410 carries the phosphoserine modification.

Belongs to the G-protein coupled receptor 1 family. Neurotensin receptor subfamily. NTSR2 sub-subfamily. In terms of tissue distribution, abundant in cortex and hypothalamus, and lower levels seen in the heart and intestine.

The protein resides in the cell membrane. Its function is as follows. Receptor for the tridecapeptide neurotensin. It is associated with G proteins that activate a phosphatidylinositol-calcium second messenger system. The protein is Neurotensin receptor type 2 (Ntsr2) of Rattus norvegicus (Rat).